Here is a 387-residue protein sequence, read N- to C-terminus: Low specificity L-threonine aldolase (387 aa).

The residue at position 213 (lysine 213) is an N6-(pyridoxal phosphate)lysine. Lysine 228 is covalently cross-linked (Glycyl lysine isopeptide (Lys-Gly) (interchain with G-Cter in ubiquitin)). A phosphoserine mark is found at serine 367 and serine 369. Phosphothreonine is present on threonine 370.

The protein belongs to the threonine aldolase family. As to quaternary structure, homotetramer. Pyridoxal 5'-phosphate is required as a cofactor.

It catalyses the reaction L-threonine = acetaldehyde + glycine. The catalysed reaction is L-allo-threonine = acetaldehyde + glycine. It participates in amino-acid biosynthesis; glycine biosynthesis; glycine from L-allo-threonine: step 1/1. The protein operates within amino-acid degradation; L-threonine degradation via aldolase pathway; acetaldehyde and glycine from L-threonine: step 1/1. Catalyzes the cleavage of L-allo-threonine and L-threonine to glycine and acetaldehyde. The polypeptide is Low specificity L-threonine aldolase (GLY1) (Saccharomyces cerevisiae (strain ATCC 204508 / S288c) (Baker's yeast)).